The following is a 322-amino-acid chain: Ribose-phosphate pyrophosphokinase 1 (322 aa).

ATP is bound by residues Asp-39–Glu-41 and Arg-98–Gln-99. Mg(2+) is bound by residues His-132 and Asp-173. Residue Lys-196 is part of the active site. D-ribose 5-phosphate is bound by residues Arg-198, Asp-224, and Asp-228 to Thr-232.

It belongs to the ribose-phosphate pyrophosphokinase family. Class I subfamily. In terms of assembly, homohexamer. Mg(2+) serves as cofactor.

It is found in the cytoplasm. It carries out the reaction D-ribose 5-phosphate + ATP = 5-phospho-alpha-D-ribose 1-diphosphate + AMP + H(+). It functions in the pathway metabolic intermediate biosynthesis; 5-phospho-alpha-D-ribose 1-diphosphate biosynthesis; 5-phospho-alpha-D-ribose 1-diphosphate from D-ribose 5-phosphate (route I): step 1/1. Involved in the biosynthesis of the central metabolite phospho-alpha-D-ribosyl-1-pyrophosphate (PRPP) via the transfer of pyrophosphoryl group from ATP to 1-hydroxyl of ribose-5-phosphate (Rib-5-P). The chain is Ribose-phosphate pyrophosphokinase 1 from Streptococcus agalactiae serotype III (strain NEM316).